Here is a 2353-residue protein sequence, read N- to C-terminus: C2 domain-containing protein 3 (2353 aa).

Residues 1 to 27 (MKQRKGQGSGGSRGRKKRGLSDISPST) form a disordered region. Position 466 is a phosphoserine (S466). Disordered regions lie at residues 488–508 (KVLE…RNRN) and 549–568 (GVPP…AGPP). Basic residues predominate over residues 496-507 (KLKKRSAGKRNR). The C2 1 domain maps to 521–678 (DAQTMTLSVD…IQSELLSFSD (158 aa)). S728 bears the Phosphoserine mark. C2 domains are found at residues 787 to 919 (SHNL…SRLL), 985 to 1147 (QPTA…HRED), 1171 to 1339 (SSGL…TGWY), and 1403 to 1533 (EPAT…TLTV). The segment at 1569–1591 (HELDSMDCSSHSESEQLPRRNDE) is disordered. The C2 6 domain occupies 1617 to 1745 (TTAEVRLTQE…SGFQFVCGWY (129 aa)). The disordered stretch occupies residues 1822 to 1846 (SKELDFSSPGRSDTTRSQASRHEEH). The segment covering 1830 to 1839 (PGRSDTTRSQ) has biased composition (polar residues). S1891 carries the post-translational modification Phosphoserine. Disordered stretches follow at residues 1972–2032 (ALSS…NGGR), 2084–2118 (TSPW…PGPF), 2130–2269 (LSSP…QSLL), and 2301–2334 (PAAT…LNLP). Positions 2007 to 2016 (PLVRAPDKGT) are enriched in basic and acidic residues. Over residues 2084 to 2098 (TSPWSSVISDTSEVI) the composition is skewed to polar residues. Phosphoserine occurs at positions 2114 and 2132. Polar residues predominate over residues 2181 to 2198 (SGAQQSSTFVGWSSPQTD). Residues 2236–2253 (SRRENHKGPPIDSSDIRQ) are compositionally biased toward basic and acidic residues. The segment covering 2254–2267 (RQVTTGSETSTKQS) has biased composition (polar residues).

As to quaternary structure, interacts with IFT88, BBS4 and PCM1. Interacts with OFD1; OFD1 may act as a negative regulator of C2CD3. Associates with the BBSome complex.

The protein resides in the cytoplasm. It is found in the cytoskeleton. It localises to the cilium basal body. The protein localises to the microtubule organizing center. Its subcellular location is the centrosome. The protein resides in the centriole. Functionally, component of the centrioles that acts as a positive regulator of centriole elongation. Promotes assembly of centriolar distal appendage, a structure at the distal end of the mother centriole that acts as an anchor of the cilium, and is required for recruitment of centriolar distal appendages proteins CEP83, SCLT1, CEP89, FBF1 and CEP164. Not required for centriolar satellite integrity or RAB8 activation. Required for primary cilium formation. Required for sonic hedgehog/SHH signaling and for proteolytic processing of GLI3. This chain is C2 domain-containing protein 3 (C2CD3), found in Homo sapiens (Human).